A 452-amino-acid polypeptide reads, in one-letter code: Proline--tRNA ligase (452 aa).

It belongs to the class-II aminoacyl-tRNA synthetase family. ProS type 2 subfamily. In terms of assembly, homodimer.

Its subcellular location is the cytoplasm. It carries out the reaction tRNA(Pro) + L-proline + ATP = L-prolyl-tRNA(Pro) + AMP + diphosphate. Its function is as follows. Catalyzes the attachment of proline to tRNA(Pro) in a two-step reaction: proline is first activated by ATP to form Pro-AMP and then transferred to the acceptor end of tRNA(Pro). This chain is Proline--tRNA ligase, found in Jannaschia sp. (strain CCS1).